Reading from the N-terminus, the 426-residue chain is Serine--tRNA ligase (426 aa).

231–233 (TAE) serves as a coordination point for L-serine. ATP-binding positions include 262–264 (RRE) and valine 278. An L-serine-binding site is contributed by glutamate 285. 349-352 (EVSS) is an ATP binding site. Serine 384 contacts L-serine.

Belongs to the class-II aminoacyl-tRNA synthetase family. Type-1 seryl-tRNA synthetase subfamily. As to quaternary structure, homodimer. The tRNA molecule binds across the dimer.

It is found in the cytoplasm. It catalyses the reaction tRNA(Ser) + L-serine + ATP = L-seryl-tRNA(Ser) + AMP + diphosphate + H(+). It carries out the reaction tRNA(Sec) + L-serine + ATP = L-seryl-tRNA(Sec) + AMP + diphosphate + H(+). The protein operates within aminoacyl-tRNA biosynthesis; selenocysteinyl-tRNA(Sec) biosynthesis; L-seryl-tRNA(Sec) from L-serine and tRNA(Sec): step 1/1. Functionally, catalyzes the attachment of serine to tRNA(Ser). Is also able to aminoacylate tRNA(Sec) with serine, to form the misacylated tRNA L-seryl-tRNA(Sec), which will be further converted into selenocysteinyl-tRNA(Sec). This Chlamydia caviae (strain ATCC VR-813 / DSM 19441 / 03DC25 / GPIC) (Chlamydophila caviae) protein is Serine--tRNA ligase.